The following is a 426-amino-acid chain: Inhibin beta A chain (426 aa).

The signal sequence occupies residues 1–20 (MPLLWLRGFLLASCWIIVKS). A propeptide spanning residues 21–310 (SPTPGSEGHS…EDHPHRRRRR (290 aa)) is cleaved from the precursor. Asparagine 165 carries N-linked (GlcNAc...) asparagine glycosylation. Positions 177 to 186 (QQQKHPQGSS) are enriched in polar residues. 2 disordered regions span residues 177–201 (QQQKHPQGSSDTREEAEEADLMEER) and 260–291 (KKKKEEEGEGKKKDGGEAGAGVDEEKEQSHRP). A compositionally biased stretch (basic and acidic residues) spans 263-275 (KEEEGEGKKKDGG). 4 disulfide bridges follow: cysteine 314/cysteine 322, cysteine 321/cysteine 391, cysteine 350/cysteine 423, and cysteine 354/cysteine 425.

Belongs to the TGF-beta family. Dimeric, linked by one or more disulfide bonds. Inhibin A is a dimer of alpha/INHA and beta-A/INHBA. Activin A is a homodimer of beta-A/INHBA. Activin AB is a dimer of beta-A/INHBA and beta-B/INHBB. Interacts with FST and FSTL3; these interactions prevent activin A interaction to its type II receptor. Activin A interacts with ACVR2A. Activin A interacts with BMPR2. Inhibin A interacts with ACVR1; this interaction creates a non-signaling complex (NSC) that inhibits ACVR1-mediated BMP signaling. Inhibin A interacts with ACVR2A.

The protein localises to the secreted. In terms of biological role, inhibins/activins are involved in regulating a number of diverse functions such as hypothalamic and pituitary hormone secretion, gonadal hormone secretion, germ cell development and maturation, erythroid differentiation, insulin secretion, nerve cell survival, embryonic axial development or bone growth, depending on their subunit composition. Activin A is a homodimer of INHBA that plays a role in several essential biological processes including embryonic development, stem cell maintenance and differentiation, haematopoiesis, cell proliferation and tissue fibrosis. Signals through type I (such as ACVR1B or ACVR1C) and type II receptors (such as ACVR2A, ACVR2B or BMPR2) which, upon ligand binding, phosphorylate SMAD2 and SMAD3 intracellular signaling mediators that form a complex with SMAD4, translocate to the nucleus and modulate gene expression. Can also activate alternative non-canonical intracellular signaling pathways including the p38 MAPK, extracellular signal-regulated kinases 1/2 (ERK1/2) and c-Jun N-terminal kinases (JNKs) to modulate cell migration and differentiation. Alternatively, promotes osteoblastic differentiation via ACVRL1-SMAD1/5/9 pathway. In addition, can engage the type I receptor ACVR1 to form an ACVR1-activin A-type II receptor non-signaling complex (NSC) that renders receptors unavailable for engagement with BMPs, hence resulting in an apparent inhibition of ACVR1-mediated BMP signaling. Its function is as follows. Inhibin A is a dimer of alpha/INHA and beta-A/INHBA that functions as a feedback regulator in the hypothalamic-pituitary-gonadal (HPG) axis. Inhibits the secretion of FSH from the anterior pituitary gland by acting on pituitary gonadotrope cells. Antagonizes activin A by binding to the proteoglycan, betaglycan, and forming a stable complex with and, thereby, sequestering type II activin receptors while excluding type I receptor. This chain is Inhibin beta A chain (INHBA), found in Equus caballus (Horse).